We begin with the raw amino-acid sequence, 242 residues long: Large ribosomal subunit protein uL30y (242 aa).

It belongs to the universal ribosomal protein uL30 family.

This is Large ribosomal subunit protein uL30y (RPL7B) from Arabidopsis thaliana (Mouse-ear cress).